Here is a 103-residue protein sequence, read N- to C-terminus: Pyrimidine/purine nucleoside phosphorylase (103 aa).

It belongs to the nucleoside phosphorylase PpnP family.

The catalysed reaction is a purine D-ribonucleoside + phosphate = a purine nucleobase + alpha-D-ribose 1-phosphate. It catalyses the reaction adenosine + phosphate = alpha-D-ribose 1-phosphate + adenine. The enzyme catalyses cytidine + phosphate = cytosine + alpha-D-ribose 1-phosphate. It carries out the reaction guanosine + phosphate = alpha-D-ribose 1-phosphate + guanine. The catalysed reaction is inosine + phosphate = alpha-D-ribose 1-phosphate + hypoxanthine. It catalyses the reaction thymidine + phosphate = 2-deoxy-alpha-D-ribose 1-phosphate + thymine. The enzyme catalyses uridine + phosphate = alpha-D-ribose 1-phosphate + uracil. It carries out the reaction xanthosine + phosphate = alpha-D-ribose 1-phosphate + xanthine. Its function is as follows. Catalyzes the phosphorolysis of diverse nucleosides, yielding D-ribose 1-phosphate and the respective free bases. Can use uridine, adenosine, guanosine, cytidine, thymidine, inosine and xanthosine as substrates. Also catalyzes the reverse reactions. In Shewanella denitrificans (strain OS217 / ATCC BAA-1090 / DSM 15013), this protein is Pyrimidine/purine nucleoside phosphorylase.